The sequence spans 366 residues: Carboxy-cis,cis-muconate cyclase (366 aa).

Catalysis depends on residues His149, Arg197, Glu213, and Arg275.

This sequence belongs to the cycloisomerase 2 family. Homotetramer.

It carries out the reaction 3-carboxy-2,5-dihydro-5-oxofuran-2-acetate = 3-carboxy-cis,cis-muconate. The protein operates within aromatic compound metabolism; beta-ketoadipate pathway; 3-carboxy-cis,cis-muconate from 3-carboxy-2,5-dihydro-5-oxofuran-2-acetate: step 1/1. In terms of biological role, catalyzes a syn cycloisomerization. Also possesses mle activity. In Neurospora crassa (strain ATCC 24698 / 74-OR23-1A / CBS 708.71 / DSM 1257 / FGSC 987), this protein is Carboxy-cis,cis-muconate cyclase.